A 382-amino-acid polypeptide reads, in one-letter code: Galactokinase (382 aa).

A substrate-binding site is contributed by 34–37; it reads EHTD. 124–130 lines the ATP pocket; sequence GAGLSSS. 2 residues coordinate Mg(2+): Ser-130 and Glu-162. Residue Asp-174 is the Proton acceptor of the active site. Position 223 (Tyr-223) interacts with substrate.

This sequence belongs to the GHMP kinase family. GalK subfamily.

The protein resides in the cytoplasm. It carries out the reaction alpha-D-galactose + ATP = alpha-D-galactose 1-phosphate + ADP + H(+). Its pathway is carbohydrate metabolism; galactose metabolism. Its function is as follows. Catalyzes the transfer of the gamma-phosphate of ATP to D-galactose to form alpha-D-galactose-1-phosphate (Gal-1-P). The sequence is that of Galactokinase from Escherichia coli O7:K1 (strain IAI39 / ExPEC).